A 164-amino-acid chain; its full sequence is ATP synthase subunit b (164 aa).

The chain crosses the membrane as a helical span at residues 8–28; the sequence is IGLFFWQTIVFLILLFLMAKF.

The protein belongs to the ATPase B chain family. As to quaternary structure, F-type ATPases have 2 components, F(1) - the catalytic core - and F(0) - the membrane proton channel. F(1) has five subunits: alpha(3), beta(3), gamma(1), delta(1), epsilon(1). F(0) has three main subunits: a(1), b(2) and c(10-14). The alpha and beta chains form an alternating ring which encloses part of the gamma chain. F(1) is attached to F(0) by a central stalk formed by the gamma and epsilon chains, while a peripheral stalk is formed by the delta and b chains.

The protein localises to the cell membrane. In terms of biological role, f(1)F(0) ATP synthase produces ATP from ADP in the presence of a proton or sodium gradient. F-type ATPases consist of two structural domains, F(1) containing the extramembraneous catalytic core and F(0) containing the membrane proton channel, linked together by a central stalk and a peripheral stalk. During catalysis, ATP synthesis in the catalytic domain of F(1) is coupled via a rotary mechanism of the central stalk subunits to proton translocation. Component of the F(0) channel, it forms part of the peripheral stalk, linking F(1) to F(0). This is ATP synthase subunit b from Christiangramia forsetii (strain DSM 17595 / CGMCC 1.15422 / KT0803) (Gramella forsetii).